A 173-amino-acid polypeptide reads, in one-letter code: Putative phosphoesterase GTNG_0743 (173 aa).

Catalysis depends on histidine 34, which acts as the Proton donor. Short sequence motifs (HXTX) lie at residues 34 to 37 (HITL) and 115 to 118 (HITI). Residue histidine 115 is the Proton acceptor of the active site.

Belongs to the 2H phosphoesterase superfamily. YjcG family.

The protein is Putative phosphoesterase GTNG_0743 of Geobacillus thermodenitrificans (strain NG80-2).